The sequence spans 309 residues: Porphobilinogen deaminase (309 aa).

The residue at position 241 (Cys241) is an S-(dipyrrolylmethanemethyl)cysteine.

It belongs to the HMBS family. In terms of assembly, monomer. Requires dipyrromethane as cofactor.

The catalysed reaction is 4 porphobilinogen + H2O = hydroxymethylbilane + 4 NH4(+). The protein operates within porphyrin-containing compound metabolism; protoporphyrin-IX biosynthesis; coproporphyrinogen-III from 5-aminolevulinate: step 2/4. In terms of biological role, tetrapolymerization of the monopyrrole PBG into the hydroxymethylbilane pre-uroporphyrinogen in several discrete steps. This Bacillus cereus (strain B4264) protein is Porphobilinogen deaminase.